The primary structure comprises 423 residues: Gamma-glutamyl phosphate reductase (423 aa).

Residues 1–14 show a composition bias toward low complexity; the sequence is MTLQAAPRSAAAQQ. The tract at residues 1–25 is disordered; that stretch reads MTLQAAPRSAAAQQREPDLRQEVHD. The span at 15-25 shows a compositional bias: basic and acidic residues; that stretch reads REPDLRQEVHD.

The protein belongs to the gamma-glutamyl phosphate reductase family.

The protein resides in the cytoplasm. The catalysed reaction is L-glutamate 5-semialdehyde + phosphate + NADP(+) = L-glutamyl 5-phosphate + NADPH + H(+). It functions in the pathway amino-acid biosynthesis; L-proline biosynthesis; L-glutamate 5-semialdehyde from L-glutamate: step 2/2. Functionally, catalyzes the NADPH-dependent reduction of L-glutamate 5-phosphate into L-glutamate 5-semialdehyde and phosphate. The product spontaneously undergoes cyclization to form 1-pyrroline-5-carboxylate. This is Gamma-glutamyl phosphate reductase from Mycobacterium ulcerans (strain Agy99).